Here is a 315-residue protein sequence, read N- to C-terminus: Protein TIFY 4B (315 aa).

Residues Cys113 to Pro145 form a disordered region. Positions Thr151–Asn186 constitute a Tify domain. The Jas signature appears at Gln233–Gly260. Positions Asn235–Arg242 match the Nuclear localization signal motif. A compositionally biased stretch (basic residues) spans Lys248–Lys257. Positions Lys248–Asn315 are disordered. A compositionally biased stretch (polar residues) spans Pro293 to Asn315.

Belongs to the TIFY/JAZ family. As to quaternary structure, interacts with AFPH2/NINJA.

The protein resides in the nucleus. In terms of biological role, regulates the arrest of dispersed meristematic cells during lamina development. The polypeptide is Protein TIFY 4B (TIFY4B) (Arabidopsis thaliana (Mouse-ear cress)).